Consider the following 50-residue polypeptide: U3-ctenitoxin-Asp1a (50 aa).

As to expression, expressed by the venom gland.

It localises to the secreted. Its function is as follows. Possible neurotoxin. The polypeptide is U3-ctenitoxin-Asp1a (Ancylometes sp. (South American fishing spider)).